A 145-amino-acid polypeptide reads, in one-letter code: Hemoglobin subunit beta-1 (145 aa).

In terms of domain architecture, Globin spans 1-145; the sequence is TFTNDESQHI…VEAALATGYH (145 aa). Residues His62 and His91 each coordinate heme b.

This sequence belongs to the globin family. As to quaternary structure, major hemoglobin is a tetramer of two alpha-1 chains and two beta-1 chains. As to expression, red blood cells.

Involved in oxygen transport from the lung to the various peripheral tissues. This chain is Hemoglobin subunit beta-1 (HBB1), found in Triturus cristatus (Great crested newt).